A 171-amino-acid polypeptide reads, in one-letter code: uncharacterized protein (171 aa).

The signal sequence occupies residues 1 to 18 (MRYSKLTMLIPCALLLSA). The N-palmitoyl cysteine moiety is linked to residue Cys19. Cys19 is lipidated: S-diacylglycerol cysteine.

The protein resides in the cell membrane. This is an uncharacterized protein from Escherichia coli (strain K12).